An 880-amino-acid polypeptide reads, in one-letter code: Alanine--tRNA ligase (880 aa).

The protein belongs to the class-II aminoacyl-tRNA synthetase family.

It localises to the cytoplasm. It carries out the reaction tRNA(Ala) + L-alanine + ATP = L-alanyl-tRNA(Ala) + AMP + diphosphate. In terms of biological role, catalyzes the attachment of alanine to tRNA(Ala) in a two-step reaction: alanine is first activated by ATP to form Ala-AMP and then transferred to the acceptor end of tRNA(Ala). Also edits incorrectly charged Ser-tRNA(Ala) and Gly-tRNA(Ala) via its editing domain. The polypeptide is Alanine--tRNA ligase (alaS) (Lactiplantibacillus plantarum (strain ATCC BAA-793 / NCIMB 8826 / WCFS1) (Lactobacillus plantarum)).